We begin with the raw amino-acid sequence, 342 residues long: S-adenosylmethionine:tRNA ribosyltransferase-isomerase (342 aa).

Belongs to the QueA family. As to quaternary structure, monomer.

The protein localises to the cytoplasm. The enzyme catalyses 7-aminomethyl-7-carbaguanosine(34) in tRNA + S-adenosyl-L-methionine = epoxyqueuosine(34) in tRNA + adenine + L-methionine + 2 H(+). It functions in the pathway tRNA modification; tRNA-queuosine biosynthesis. Transfers and isomerizes the ribose moiety from AdoMet to the 7-aminomethyl group of 7-deazaguanine (preQ1-tRNA) to give epoxyqueuosine (oQ-tRNA). The polypeptide is S-adenosylmethionine:tRNA ribosyltransferase-isomerase (Listeria monocytogenes serotype 4a (strain HCC23)).